The sequence spans 241 residues: Proteasome subunit alpha (241 aa).

This sequence belongs to the peptidase T1A family. In terms of assembly, the 20S proteasome core is composed of 14 alpha and 14 beta subunits that assemble into four stacked heptameric rings, resulting in a barrel-shaped structure. The two inner rings, each composed of seven catalytic beta subunits, are sandwiched by two outer rings, each composed of seven alpha subunits. The catalytic chamber with the active sites is on the inside of the barrel. Has a gated structure, the ends of the cylinder being occluded by the N-termini of the alpha-subunits. Is capped by the proteasome-associated ATPase, ARC.

It is found in the cytoplasm. The protein operates within protein degradation; proteasomal Pup-dependent pathway. With respect to regulation, the formation of the proteasomal ATPase ARC-20S proteasome complex, likely via the docking of the C-termini of ARC into the intersubunit pockets in the alpha-rings, may trigger opening of the gate for substrate entry. Interconversion between the open-gate and close-gate conformations leads to a dynamic regulation of the 20S proteasome proteolysis activity. In terms of biological role, component of the proteasome core, a large protease complex with broad specificity involved in protein degradation. In Frankia alni (strain DSM 45986 / CECT 9034 / ACN14a), this protein is Proteasome subunit alpha.